Reading from the N-terminus, the 457-residue chain is Adenylosuccinate synthetase isozyme 2 A (457 aa).

Residues 40–46 and 68–70 each bind GTP; these read GDEGKGK and GHT. Aspartate 41 acts as the Proton acceptor in catalysis. Mg(2+) contacts are provided by aspartate 41 and glycine 68. Aspartate 41 contributes to the substrate binding site. Residues 41–44, 66–69, threonine 163, arginine 177, asparagine 256, threonine 271, and arginine 335 contribute to the IMP site; these read DEGK and NAGH. Histidine 69 (proton donor) is an active-site residue. Position 331 to 337 (331 to 337) interacts with substrate; it reads VTTGRKR. Residues arginine 337, 363–365, and 445–448 each bind GTP; these read KLD and GVGK.

It belongs to the adenylosuccinate synthetase family. As to quaternary structure, homodimer. Requires Mg(2+) as cofactor.

The protein localises to the cytoplasm. It localises to the mitochondrion. The enzyme catalyses IMP + L-aspartate + GTP = N(6)-(1,2-dicarboxyethyl)-AMP + GDP + phosphate + 2 H(+). It functions in the pathway purine metabolism; AMP biosynthesis via de novo pathway; AMP from IMP: step 1/2. Inhibited competitively by AMP and IMP and non-competitively by fructose 1,6-bisphosphate. In terms of biological role, plays an important role in the de novo pathway and in the salvage pathway of purine nucleotide biosynthesis. Catalyzes the first committed step in the biosynthesis of AMP from IMP. The polypeptide is Adenylosuccinate synthetase isozyme 2 A (adss2-a) (Xenopus tropicalis (Western clawed frog)).